Consider the following 317-residue polypeptide: MSQEYLDFELPIAELEAKIESLRSVCAQDGKIDLEDEINRLQHKSQELTKKTFANLDAWQVSRMARHPNRPYTLDYIEHIFTEFDELAGDRAFADDKAIVGGIARLDGRPVMVIGHQKGRVTKEKVKRNFGMPAPEGYRKALRLMEMAERFKMPIITFIDTPGAYPGIGAEERGQAEAIARNLREMSQLSVPIICTVIGEGGSGGALAIGVGDKVNMLQYSTYSVISPEGCASILWKSAEKASMAAEVMGLTAQRLKELNLIDGIVDEPLGGAHRDVLKIAHNLKQQILADLAELDSLTTEALLERRYERLMSYGYV.

The CoA carboxyltransferase C-terminal domain maps to 40–294 (RLQHKSQELT…KQQILADLAE (255 aa)).

Belongs to the AccA family. In terms of assembly, acetyl-CoA carboxylase is a heterohexamer composed of biotin carboxyl carrier protein (AccB), biotin carboxylase (AccC) and two subunits each of ACCase subunit alpha (AccA) and ACCase subunit beta (AccD).

Its subcellular location is the cytoplasm. It catalyses the reaction N(6)-carboxybiotinyl-L-lysyl-[protein] + acetyl-CoA = N(6)-biotinyl-L-lysyl-[protein] + malonyl-CoA. It participates in lipid metabolism; malonyl-CoA biosynthesis; malonyl-CoA from acetyl-CoA: step 1/1. Component of the acetyl coenzyme A carboxylase (ACC) complex. First, biotin carboxylase catalyzes the carboxylation of biotin on its carrier protein (BCCP) and then the CO(2) group is transferred by the carboxyltransferase to acetyl-CoA to form malonyl-CoA. The polypeptide is Acetyl-coenzyme A carboxylase carboxyl transferase subunit alpha (Haemophilus ducreyi (strain 35000HP / ATCC 700724)).